We begin with the raw amino-acid sequence, 469 residues long: Glutamate--tRNA ligase (469 aa).

A 'HIGH' region motif is present at residues 9-19; the sequence is PSPTGFLHVGG. Residues cysteine 98, cysteine 100, cysteine 125, and aspartate 127 each contribute to the Zn(2+) site. Residues 236–240 carry the 'KMSKS' region motif; that stretch reads KLSKR. Residue lysine 239 participates in ATP binding.

Belongs to the class-I aminoacyl-tRNA synthetase family. Glutamate--tRNA ligase type 1 subfamily. As to quaternary structure, monomer. Requires Zn(2+) as cofactor.

It localises to the cytoplasm. It catalyses the reaction tRNA(Glu) + L-glutamate + ATP = L-glutamyl-tRNA(Glu) + AMP + diphosphate. Its function is as follows. Catalyzes the attachment of glutamate to tRNA(Glu) in a two-step reaction: glutamate is first activated by ATP to form Glu-AMP and then transferred to the acceptor end of tRNA(Glu). The protein is Glutamate--tRNA ligase of Shewanella baltica (strain OS155 / ATCC BAA-1091).